The following is a 146-amino-acid chain: MLLQGTHRIGRMAMLLALADENESPVLSIPKGWKYCTGKVGSMNSQKVVAAMETAAKSNQVIETDVYRETHALYHAIMEALYGVTRGQIQLADVLRTVGLRFAIVRGTPYDGKKEGEWVAVALYGTIGAPVKGSEHEAIGLGINHI.

This sequence belongs to the HutP family. Homohexamer.

Its function is as follows. Antiterminator that binds to cis-acting regulatory sequences on the mRNA in the presence of histidine, thereby suppressing transcription termination and activating the hut operon for histidine utilization. The polypeptide is Hut operon positive regulatory protein (Bacillus anthracis (strain CDC 684 / NRRL 3495)).